A 1081-amino-acid chain; its full sequence is Zinc finger protein 827 (1081 aa).

Residues M1–K10 are compositionally biased toward basic and acidic residues. The mediates direct interaction with RBBP4 stretch occupies residues M1–S14. The segment at M1–S77 is disordered. The RRK motif; mediates NuRD recruitment to telomeres signature appears at R3–K5. Over residues E62–S77 the composition is skewed to polar residues. Residues K176, K216, and K226 each participate in a glycyl lysine isopeptide (Lys-Gly) (interchain with G-Cter in SUMO2) cross-link. Disordered stretches follow at residues K259–F278 and S307–L348. Over residues V327 to Q344 the composition is skewed to pro residues. Glycyl lysine isopeptide (Lys-Gly) (interchain with G-Cter in SUMO2) cross-links involve residues K360 and K372. 3 consecutive C2H2-type zinc fingers follow at residues F374–H396, H402–H424, and F433–H455. Glycyl lysine isopeptide (Lys-Gly) (interchain with G-Cter in SUMO2) cross-links involve residues K466, K475, K523, K549, K580, K587, K597, K634, K639, and K658. Residue K673 forms a Glycyl lysine isopeptide (Lys-Gly) (interchain with G-Cter in SUMO1); alternate linkage. K673 participates in a covalent cross-link: Glycyl lysine isopeptide (Lys-Gly) (interchain with G-Cter in SUMO2); alternate. Residues K704, K710, K742, K778, and K798 each participate in a glycyl lysine isopeptide (Lys-Gly) (interchain with G-Cter in SUMO2) cross-link. 2 C2H2-type zinc fingers span residues F817 to H839 and Y845 to H867. Residues K870 and K891 each participate in a glycyl lysine isopeptide (Lys-Gly) (interchain with G-Cter in SUMO2) cross-link. C2H2-type zinc fingers lie at residues Y897 to H919 and I929 to H952. A compositionally biased stretch (basic and acidic residues) spans H947–P960. The disordered stretch occupies residues H947–L996. K958 is covalently cross-linked (Glycyl lysine isopeptide (Lys-Gly) (interchain with G-Cter in SUMO2)). The segment covering S961–A978 has biased composition (low complexity). The span at N979–Q988 shows a compositional bias: basic and acidic residues. A Glycyl lysine isopeptide (Lys-Gly) (interchain with G-Cter in SUMO2) cross-link involves residue K1014. 2 consecutive C2H2-type zinc fingers follow at residues F1019–H1041 and F1047–H1069.

This sequence belongs to the krueppel C2H2-type zinc-finger protein family. In terms of assembly, part of a transcription inhibitory ribonucleoprotein complex composed at least of the circular RNA circZNF827, HNRNPK and HNRNPL. Interacts with the nucleosome remodeling and histone deacetylase/NuRD complex. Interacts with RBBP4; the interaction is direct and recruits RBBP4, a component of the NuRD complex, to telomeres.

The protein resides in the nucleus. It localises to the chromosome. It is found in the telomere. Its function is as follows. As part of a ribonucleoprotein complex composed at least of HNRNPK, HNRNPL and the circular RNA circZNF827 that nucleates the complex on chromatin, may negatively regulate the transcription of genes involved in neuronal differentiation. Could also recruit the nucleosome remodeling and histone deacetylase/NuRD complex to telomeric regions of chromosomes to regulate chromatin remodeling as part of telomere maintenance. This is Zinc finger protein 827 (ZNF827) from Homo sapiens (Human).